Here is a 338-residue protein sequence, read N- to C-terminus: Fructose-1,6-bisphosphatase class 1 1 (338 aa).

Mg(2+) is bound by residues Glu94, Asp116, Leu118, and Asp119. Residues 119–122 (DGSS), Asn210, and Lys276 each bind substrate. Glu282 is a binding site for Mg(2+).

Belongs to the FBPase class 1 family. As to quaternary structure, homotetramer. Mg(2+) is required as a cofactor.

It localises to the cytoplasm. It carries out the reaction beta-D-fructose 1,6-bisphosphate + H2O = beta-D-fructose 6-phosphate + phosphate. It participates in carbohydrate biosynthesis; gluconeogenesis. The sequence is that of Fructose-1,6-bisphosphatase class 1 1 from Paraburkholderia phymatum (strain DSM 17167 / CIP 108236 / LMG 21445 / STM815) (Burkholderia phymatum).